A 123-amino-acid polypeptide reads, in one-letter code: Large ribosomal subunit protein uL14 (123 aa).

Belongs to the universal ribosomal protein uL14 family. As to quaternary structure, part of the 50S ribosomal subunit. Forms a cluster with proteins L3 and L19. In the 70S ribosome, L14 and L19 interact and together make contacts with the 16S rRNA in bridges B5 and B8.

Its function is as follows. Binds to 23S rRNA. Forms part of two intersubunit bridges in the 70S ribosome. The sequence is that of Large ribosomal subunit protein uL14 from Escherichia coli O139:H28 (strain E24377A / ETEC).